A 62-amino-acid chain; its full sequence is Cytotoxin homolog (62 aa).

Disulfide bonds link Cys3/Cys22, Cys15/Cys40, Cys44/Cys55, and Cys56/Cys61.

Belongs to the three-finger toxin family. Short-chain subfamily. Orphan group XV sub-subfamily. As to expression, expressed by the venom gland.

It localises to the secreted. It is found in the target cell membrane. Functionally, has low cytotoxic activity. The polypeptide is Cytotoxin homolog (Naja kaouthia (Monocled cobra)).